Reading from the N-terminus, the 270-residue chain is NFAT activation molecule 1 (270 aa).

The N-terminal stretch at 1 to 42 (MENQPVRWRALPGLPRPPGLPAAPWLLLGVLLLPGTLRLAGG) is a signal peptide. The Extracellular segment spans residues 43–163 (QSVTHTGLPI…YREPPQSPQK (121 aa)). The Ig-like V-type domain occupies 50-150 (LPIMASLANT…RGSGTFILVR (101 aa)). Cys-65 and Cys-114 are disulfide-bonded. The N-linked (GlcNAc...) asparagine glycan is linked to Asn-107. Residues 164–184 (LLLFGFTGLLSVLSVVGTALL) form a helical membrane-spanning segment. Residues 185-270 (LWNKKRMRGP…GELNLVYENL (86 aa)) are Cytoplasmic-facing. The disordered stretch occupies residues 190–219 (RMRGPGKDPTRKCPDPRSASSPKQHPSESV). A compositionally biased stretch (basic and acidic residues) spans 194–204 (PGKDPTRKCPD). Over residues 207–219 (SASSPKQHPSESV) the composition is skewed to polar residues. Positions 209–237 (SSPKQHPSESVYTALQRRETEVYACIENE) constitute an ITAM domain. A phosphotyrosine mark is found at Tyr-220 and Tyr-231. Positions 234–262 (IENEDGSSPTAKQSPLSQERPHRFEDDGE) are disordered. Residues 239–250 (GSSPTAKQSPLS) show a composition bias toward polar residues.

No direct interaction with the B-cell antigen receptor (BCR). Interacts with SYK; probably involved in BCR signaling. Interacts with ZAP70. Post-translationally, N-glycosylated. In terms of tissue distribution, highly expressed in neutrophils, primary monocytes, mast cells, monocytic cell lines and lymphocytes. Also expressed in spleen B and T-cells, and lung. Expressed at low level in non-immune tissue.

It is found in the cell membrane. In terms of biological role, may function in immune system as a receptor which activates via the calcineurin/NFAT-signaling pathway the downstream cytokine gene promoters. Activates the transcription of IL-13 and TNF-alpha promoters. May be involved in the regulation of B-cell, but not T-cell, development. Overexpression activates downstream effectors without ligand binding or antibody cross-linking. The sequence is that of NFAT activation molecule 1 (NFAM1) from Homo sapiens (Human).